Consider the following 1039-residue polypeptide: DIS3-like exonuclease 1 (1039 aa).

The 89-residue stretch at 221–309 (PEHLPLEILE…KGRNGALCEN (89 aa)) folds into the CSD1 domain. One can recognise a CSD2 domain in the interval 359–425 (VLVMPWDYRI…AEIATILVEN (67 aa)). In terms of domain architecture, RNB spans 458 to 807 (RLDLRKTHLV…VHRLLLAAVN (350 aa)).

It belongs to the RNR ribonuclease family. As to quaternary structure, component of the RNA exosome complex. Requires Mg(2+) as cofactor.

It localises to the cytoplasm. It carries out the reaction Exonucleolytic cleavage in the 3'- to 5'-direction to yield nucleoside 5'-phosphates.. In terms of biological role, catalytic component of the RNA exosome complex which has 3'-&gt;5' exoribonuclease activity and participates in a multitude of cellular RNA processing and degradation events. The protein is DIS3-like exonuclease 1 (dis3l) of Xenopus tropicalis (Western clawed frog).